Consider the following 140-residue polypeptide: Putative nickel-responsive regulator 3 (140 aa).

Residues His-81, His-92, His-94, and Cys-100 each coordinate Ni(2+).

It belongs to the transcriptional regulatory CopG/NikR family. It depends on Ni(2+) as a cofactor.

Its function is as follows. Transcriptional regulator. This Methanosarcina mazei (strain ATCC BAA-159 / DSM 3647 / Goe1 / Go1 / JCM 11833 / OCM 88) (Methanosarcina frisia) protein is Putative nickel-responsive regulator 3.